The sequence spans 260 residues: Thiazole synthase (260 aa).

Catalysis depends on K101, which acts as the Schiff-base intermediate with DXP. Residues G162, 188 to 189 (AG), and 210 to 211 (NT) contribute to the 1-deoxy-D-xylulose 5-phosphate site.

It belongs to the ThiG family. In terms of assembly, homotetramer. Forms heterodimers with either ThiH or ThiS.

Its subcellular location is the cytoplasm. The enzyme catalyses [ThiS sulfur-carrier protein]-C-terminal-Gly-aminoethanethioate + 2-iminoacetate + 1-deoxy-D-xylulose 5-phosphate = [ThiS sulfur-carrier protein]-C-terminal Gly-Gly + 2-[(2R,5Z)-2-carboxy-4-methylthiazol-5(2H)-ylidene]ethyl phosphate + 2 H2O + H(+). It participates in cofactor biosynthesis; thiamine diphosphate biosynthesis. Catalyzes the rearrangement of 1-deoxy-D-xylulose 5-phosphate (DXP) to produce the thiazole phosphate moiety of thiamine. Sulfur is provided by the thiocarboxylate moiety of the carrier protein ThiS. In vitro, sulfur can be provided by H(2)S. The protein is Thiazole synthase of Acidithiobacillus ferrooxidans (strain ATCC 23270 / DSM 14882 / CIP 104768 / NCIMB 8455) (Ferrobacillus ferrooxidans (strain ATCC 23270)).